The primary structure comprises 59 residues: Large ribosomal subunit protein bL32 (59 aa).

The tract at residues 1–28 is disordered; that stretch reads MAVQQNKKSPSKRGMHRAHDFLTDPPLA.

Belongs to the bacterial ribosomal protein bL32 family.

This chain is Large ribosomal subunit protein bL32, found in Aromatoleum aromaticum (strain DSM 19018 / LMG 30748 / EbN1) (Azoarcus sp. (strain EbN1)).